A 293-amino-acid polypeptide reads, in one-letter code: Undecaprenyl-diphosphatase (293 aa).

The next 8 helical transmembrane spans lie at 3–23 (IALA…EFLP), 43–63 (KGKI…CWEF), 85–105 (ANVV…GKWI), 109–129 (LFNP…ILLA), 178–198 (FALV…MLFG), 203–223 (VATE…TVYE), 238–258 (IFAV…RWLL), and 269–289 (FAWY…SGLV).

Belongs to the UppP family.

The protein localises to the cell inner membrane. It catalyses the reaction di-trans,octa-cis-undecaprenyl diphosphate + H2O = di-trans,octa-cis-undecaprenyl phosphate + phosphate + H(+). Functionally, catalyzes the dephosphorylation of undecaprenyl diphosphate (UPP). Confers resistance to bacitracin. This is Undecaprenyl-diphosphatase from Cupriavidus necator (strain ATCC 17699 / DSM 428 / KCTC 22496 / NCIMB 10442 / H16 / Stanier 337) (Ralstonia eutropha).